The primary structure comprises 93 residues: U12-lycotoxin-Ls1c (93 aa).

The first 18 residues, 1–18 (MKFAVILLFSLVVLAVAS), serve as a signal peptide directing secretion. Positions 19–38 (ESVEEVRREIDIEDLPEQQR) are excised as a propeptide.

This sequence belongs to the neurotoxin 31 family. Contains 5 disulfide bonds. In terms of tissue distribution, expressed by the venom gland.

It is found in the secreted. This chain is U12-lycotoxin-Ls1c, found in Lycosa singoriensis (Wolf spider).